We begin with the raw amino-acid sequence, 506 residues long: Histone acetyltransferase esa-1 (506 aa).

The tract at residues 1 to 24 is disordered; the sequence is MSPPGGDATVGSDEKRQKGKATPD. The region spanning 26-78 is the Tudor-knot domain; it reads IKMGCIAMVMKEGQLRRAEILSIKDTKSGRQFYCNFDNFNKRLDEWVPAARID. The tract at residues 82 to 215 is disordered; it reads DVEWPNPDKD…LRTSGSMTQN (134 aa). Basic and acidic residues predominate over residues 87–98; that stretch reads NPDKDKQKDAKT. Residues 109-120 are compositionally biased toward basic residues; sequence QPSKKNNQKKAS. A compositionally biased stretch (basic and acidic residues) spans 167–178; that stretch reads GGDKGVKRKADE. In terms of domain architecture, MYST-type HAT spans 220-494; it reads SRIRNISKVE…IDPERIQWKP (275 aa). Residues 253-278 form a C2HC MYST-type zinc finger; sequence IYICEFCLSYYGELKSFVRHRQKCTL. The short motif at 303–324 is the ESA1-RPD3 motif element; the sequence is RTWCRNLCLLSKMFLDHKTLYY. Lys-320 is modified (N6-acetyllysine; by autocatalysis). Residues 361 to 365 and 370 to 376 each bind acetyl-CoA; these read ACILT and QRKGYGR. Glu-396 (proton donor/acceptor) is an active-site residue. Ser-400 serves as a coordination point for acetyl-CoA.

Belongs to the MYST (SAS/MOZ) family. Component of the NuA4 histone acetyltransferase complex. In terms of processing, autoacetylation at Lys-320 is required for proper function.

The protein resides in the nucleus. Its subcellular location is the chromosome. It catalyses the reaction L-lysyl-[histone] + acetyl-CoA = N(6)-acetyl-L-lysyl-[histone] + CoA + H(+). It carries out the reaction L-lysyl-[protein] + acetyl-CoA = N(6)-acetyl-L-lysyl-[protein] + CoA + H(+). The enzyme catalyses 2-hydroxyisobutanoyl-CoA + L-lysyl-[protein] = N(6)-(2-hydroxyisobutanoyl)-L-lysyl-[protein] + CoA + H(+). The catalysed reaction is (2E)-butenoyl-CoA + L-lysyl-[protein] = N(6)-(2E)-butenoyl-L-lysyl-[protein] + CoA + H(+). In terms of biological role, catalytic component of the NuA4 histone acetyltransferase (HAT) complex which is involved in epigenetic transcriptional activation of selected genes principally by acetylation of nucleosomal histones H4, H3, H2B, H2A and H2A variant H2A.Z. Acetylates histone H4 to form H4K5ac, H4K8ac, H4K12ac and H4K16ac, histone H3 to form H3K14ac, and histone H2A to form H2AK4ac and H2AK7ac. The NuA4 complex is involved in the DNA damage response and is required for chromosome segregation. The NuA4 complex plays a direct role in repair of DNA double-strand breaks (DSBs) through homologous recombination. Recruitment to promoters depends on H3K4me. Also acetylates non-histone proteins. In addition to protein acetyltransferase, can use different acyl-CoA substrates, such as 2-hydroxyisobutanoyl-CoA (2-hydroxyisobutyryl-CoA) or (2E)-butenoyl-CoA (crotonyl-CoA), and is able to mediate protein 2-hydroxyisobutyrylation and crotonylation, respectively. In Neurospora crassa (strain ATCC 24698 / 74-OR23-1A / CBS 708.71 / DSM 1257 / FGSC 987), this protein is Histone acetyltransferase esa-1 (esa-1).